Consider the following 151-residue polypeptide: Large ribosomal subunit protein bL9 (151 aa).

This sequence belongs to the bacterial ribosomal protein bL9 family.

Functionally, binds to the 23S rRNA. The protein is Large ribosomal subunit protein bL9 of Lactobacillus acidophilus (strain ATCC 700396 / NCK56 / N2 / NCFM).